The chain runs to 184 residues: UPF0398 protein BALH_1408 (184 aa).

The protein belongs to the UPF0398 family.

This is UPF0398 protein BALH_1408 from Bacillus thuringiensis (strain Al Hakam).